A 120-amino-acid chain; its full sequence is Large ribosomal subunit protein bL19 (120 aa).

The protein belongs to the bacterial ribosomal protein bL19 family.

Its function is as follows. This protein is located at the 30S-50S ribosomal subunit interface and may play a role in the structure and function of the aminoacyl-tRNA binding site. The sequence is that of Large ribosomal subunit protein bL19 from Microcystis aeruginosa (strain NIES-843 / IAM M-2473).